We begin with the raw amino-acid sequence, 239 residues long: Glycerol-3-phosphate acyltransferase (239 aa).

6 consecutive transmembrane segments (helical) span residues 6-26, 61-81, 99-119, 135-155, 159-179, and 199-219; these read AIAL…SVMF, FLVG…SFLI, YYLT…PLYF, LAIS…VTLI, VSLA…VPWL, and WYII…VFWL.

It belongs to the PlsY family. As to quaternary structure, probably interacts with PlsX.

The protein resides in the cell membrane. It carries out the reaction an acyl phosphate + sn-glycerol 3-phosphate = a 1-acyl-sn-glycero-3-phosphate + phosphate. The protein operates within lipid metabolism; phospholipid metabolism. In terms of biological role, catalyzes the transfer of an acyl group from acyl-phosphate (acyl-PO(4)) to glycerol-3-phosphate (G3P) to form lysophosphatidic acid (LPA). This enzyme utilizes acyl-phosphate as fatty acyl donor, but not acyl-CoA or acyl-ACP. The polypeptide is Glycerol-3-phosphate acyltransferase (Mycoplasma pneumoniae (strain ATCC 29342 / M129 / Subtype 1) (Mycoplasmoides pneumoniae)).